The sequence spans 47 residues: Large ribosomal subunit protein bL33C (47 aa).

This sequence belongs to the bacterial ribosomal protein bL33 family.

The sequence is that of Large ribosomal subunit protein bL33C from Staphylococcus aureus (strain MRSA252).